A 461-amino-acid chain; its full sequence is Alcaligin biosynthesis enzyme (461 aa).

9-15 (VAIGIGP) serves as a coordination point for FAD.

The protein belongs to the lysine N(6)-hydroxylase/L-ornithine N(5)-oxygenase family. FAD is required as a cofactor.

It functions in the pathway siderophore biosynthesis; alcaligin biosynthesis. The protein is Alcaligin biosynthesis enzyme (alcA) of Bordetella parapertussis (strain 12822 / ATCC BAA-587 / NCTC 13253).